Consider the following 243-residue polypeptide: Myelin protein P0 (243 aa).

Residues 1 to 26 (MESSGLRAPCSLLVLLSALVLPPTLA) form the signal peptide. The 115-residue stretch at 27-141 (IEVYTDREVY…VGKSSYVHLQ (115 aa)) folds into the Ig-like V-type domain. Residues 27–154 (IEVYTDREVY…KGAARAGLVL (128 aa)) lie on the Extracellular side of the membrane. The cysteines at positions 47 and 123 are disulfide-linked. An N-linked (GlcNAc...) asparagine glycan is attached at Asn118. The chain crosses the membrane as a helical span at residues 155-175 (GIIIAVALALVIVVTILILLI). At 176–243 (RYCWLRRQVR…GIGDSRKDRK (68 aa)) the chain is on the cytoplasmic side. Residues 201 to 243 (AKDSSKRSSRQTPILYAMLDQTRGKASEKKGKGGIGDSRKDRK) form a disordered region. A compositionally biased stretch (basic and acidic residues) spans 222–243 (TRGKASEKKGKGGIGDSRKDRK).

This sequence belongs to the myelin P0 protein family.

The protein resides in the cell membrane. Its function is as follows. Creation of an extracellular membrane face which guides the wrapping process and ultimately compacts adjacent lamellae. This is Myelin protein P0 (mpz) from Xenopus tropicalis (Western clawed frog).